The primary structure comprises 164 residues: Cyanate hydratase (164 aa).

Residues arginine 104, glutamate 107, and serine 130 contribute to the active site.

Belongs to the cyanase family.

The enzyme catalyses cyanate + hydrogencarbonate + 3 H(+) = NH4(+) + 2 CO2. Its function is as follows. Catalyzes the reaction of cyanate with bicarbonate to produce ammonia and carbon dioxide. The protein is Cyanate hydratase of Botryotinia fuckeliana (strain B05.10) (Noble rot fungus).